The primary structure comprises 612 residues: tRNA(Met) cytidine acetyltransferase TmcA (612 aa).

ATP-binding positions include glutamine 136, 161–170 (GRGKSTLLGQ), and arginine 284. The region spanning 319 to 499 (KHASELEEAL…PAAIYALPLT (181 aa)) is the N-acetyltransferase domain. 424 to 426 (IAV) serves as a coordination point for acetyl-CoA.

It belongs to the RNA cytidine acetyltransferase family. TmcA subfamily.

Its subcellular location is the cytoplasm. It catalyses the reaction cytidine(34) in elongator tRNA(Met) + acetyl-CoA + ATP + H2O = N(4)-acetylcytidine(34) in elongator tRNA(Met) + ADP + phosphate + CoA + H(+). In terms of biological role, catalyzes the formation of N(4)-acetylcytidine (ac(4)C) at the wobble position of tRNA(Met), by using acetyl-CoA as an acetyl donor and ATP (or GTP). The sequence is that of tRNA(Met) cytidine acetyltransferase TmcA from Idiomarina loihiensis (strain ATCC BAA-735 / DSM 15497 / L2-TR).